The sequence spans 487 residues: Glutamyl-tRNA(Gln) amidotransferase subunit A (487 aa).

Catalysis depends on charge relay system residues lysine 79 and serine 158. The Acyl-ester intermediate role is filled by serine 182.

Belongs to the amidase family. GatA subfamily. Heterotrimer of A, B and C subunits.

It carries out the reaction L-glutamyl-tRNA(Gln) + L-glutamine + ATP + H2O = L-glutaminyl-tRNA(Gln) + L-glutamate + ADP + phosphate + H(+). Functionally, allows the formation of correctly charged Gln-tRNA(Gln) through the transamidation of misacylated Glu-tRNA(Gln) in organisms which lack glutaminyl-tRNA synthetase. The reaction takes place in the presence of glutamine and ATP through an activated gamma-phospho-Glu-tRNA(Gln). This chain is Glutamyl-tRNA(Gln) amidotransferase subunit A, found in Ehrlichia canis (strain Jake).